Reading from the N-terminus, the 153-residue chain is MKAFNKLFSLVVASVLVFSLAGCGDKEESKKFSANLNGTEIAITYVYKGDKVLKQSSETKIQFASIGATTKEDAAKTLEPLSAKYKNIAGVEEKLTYTDTYAQENVTIDMEKVDFKALQGISGINVSAEDAKKGITMAQMELVMKAAGFKEVK.

Positions Met-1–Gly-22 are cleaved as a signal peptide. Cys-23 is lipidated: N-palmitoyl cysteine. Residue Cys-23 is the site of S-diacylglycerol cysteine attachment.

This sequence to L.monocytogenes lmo0207.

It localises to the cell membrane. This is an uncharacterized protein from Escherichia coli (strain K12).